The primary structure comprises 183 residues: Putative manganese efflux pump MntP (183 aa).

Helical transmembrane passes span 3–23 (TISVLITALALSMDAMSLSIY), 43–63 (TFGIFQFAMALVGSLSGILFI), 66–86 (ISLYSKYVSFAIFLFLGLMML), 107–127 (LIIMGIATSLDALLVGLTFSI), 134–154 (FLYTVEIGVITAIIAGLGFIL), and 161–181 (ILGQKSHFLGAALLIFISINI).

Belongs to the MntP (TC 9.B.29) family.

The protein resides in the cell inner membrane. In terms of biological role, probably functions as a manganese efflux pump. This is Putative manganese efflux pump MntP from Fusobacterium nucleatum subsp. nucleatum (strain ATCC 25586 / DSM 15643 / BCRC 10681 / CIP 101130 / JCM 8532 / KCTC 2640 / LMG 13131 / VPI 4355).